An 836-amino-acid chain; its full sequence is DNA gyrase subunit A (836 aa).

Residues 34 to 500 (LPDARDGLKP…AGDVRDIEDI (467 aa)) enclose the Topo IIA-type catalytic domain. Tyr-122 serves as the catalytic O-(5'-phospho-DNA)-tyrosine intermediate. The GyrA-box motif lies at 527–533 (QKRGGQG).

This sequence belongs to the type II topoisomerase GyrA/ParC subunit family. Heterotetramer, composed of two GyrA and two GyrB chains. In the heterotetramer, GyrA contains the active site tyrosine that forms a transient covalent intermediate with DNA, while GyrB binds cofactors and catalyzes ATP hydrolysis.

Its subcellular location is the cytoplasm. The catalysed reaction is ATP-dependent breakage, passage and rejoining of double-stranded DNA.. In terms of biological role, a type II topoisomerase that negatively supercoils closed circular double-stranded (ds) DNA in an ATP-dependent manner to modulate DNA topology and maintain chromosomes in an underwound state. Negative supercoiling favors strand separation, and DNA replication, transcription, recombination and repair, all of which involve strand separation. Also able to catalyze the interconversion of other topological isomers of dsDNA rings, including catenanes and knotted rings. Type II topoisomerases break and join 2 DNA strands simultaneously in an ATP-dependent manner. The protein is DNA gyrase subunit A of Chlamydia trachomatis serovar D (strain ATCC VR-885 / DSM 19411 / UW-3/Cx).